We begin with the raw amino-acid sequence, 236 residues long: Peptidase E (236 aa).

Active-site charge relay system residues include Ser122, Asp137, and His159.

The protein belongs to the peptidase S51 family.

The protein resides in the cytoplasm. The enzyme catalyses Dipeptidase E catalyzes the hydrolysis of dipeptides Asp-|-Xaa. It does not act on peptides with N-terminal Glu, Asn or Gln, nor does it cleave isoaspartyl peptides.. Functionally, hydrolyzes dipeptides containing N-terminal aspartate residues. May play a role in allowing the cell to use peptide aspartate to spare carbon otherwise required for the synthesis of the aspartate family of amino acids. The protein is Peptidase E of Shewanella putrefaciens (strain CN-32 / ATCC BAA-453).